A 314-amino-acid chain; its full sequence is NF-kappa-B inhibitor alpha (314 aa).

The segment at 1 to 41 is disordered; it reads MFQPAEPGQEWAMEGPRDALKKERLLDDRHDSGLDSMKDEE. A compositionally biased stretch (basic and acidic residues) spans 15 to 41; the sequence is GPRDALKKERLLDDRHDSGLDSMKDEE. K21 is covalently cross-linked (Glycyl lysine isopeptide (Lys-Gly) (interchain with G-Cter in SUMO); alternate). K21 is covalently cross-linked (Glycyl lysine isopeptide (Lys-Gly) (interchain with G-Cter in ubiquitin); alternate). K22 participates in a covalent cross-link: Glycyl lysine isopeptide (Lys-Gly) (interchain with G-Cter in ubiquitin). A Destruction motif motif is present at residues 30-36; it reads HDSGLDS. S32 is modified (phosphoserine; by IKKA and IKKB). A Phosphoserine; by IKKA, IKKB, IKKE and TBK1 modification is found at S36. Y42 bears the Phosphotyrosine; by Tyr-kinases mark. Residues 45-54 carry the Nuclear export signal motif; that stretch reads MVKELREIRL. The Nuclear import signal motif lies at 110 to 120; sequence LQQTPLHLAVI. ANK repeat units follow at residues 110–139, 143–172, 182–211, and 216–245; these read LQQT…DPEL, RGNT…TQHL, NGHT…DVNA, and NGRT…DVNR. (3S)-3-hydroxyasparagine; by HIF1AN is present on residues N210 and N244. S283 and S288 each carry phosphoserine; by CK2. T291 is modified (phosphothreonine; by CK2). A Phosphoserine; by CK2 modification is found at S293. A Phosphothreonine modification is found at T296.

The protein belongs to the NF-kappa-B inhibitor family. As to quaternary structure, interacts with RELA; the interaction requires the nuclear import signal. Part of a 70-90 kDa complex at least consisting of CHUK, IKBKB, NFKBIA, RELA, ELP1 and MAP3K14. Interacts with NKIRAS1 and NKIRAS2. Interacts with RWDD3; the interaction enhances sumoylation. Interacts with PRMT2. Interacts with PRKACA in platelets; this interaction is disrupted by thrombin and collagen. Interacts with MEFV. Interacts with DDRGK1; positively regulates NFKBIA phosphorylation and degradation. Interacts with HNRNPA2B1; the interaction may be mediated by the RRM2 domain of HNRNPA2B1, and HNRNPA2B1 may interact simultaneously with FAM76B and either NFKBIA or NFKBIE to form a complex. Post-translationally, phosphorylated at Ser-32 and Ser-36 by IKKA/CHUK and IKKB/IKBKB; disables inhibition of NF-kappa-B DNA-binding activity. Phosphorylation at positions 32 and 36 is prerequisite to recognition by the SCF(FBXW11) and SCF(BTRC) complexes, leading to polyubiquitination and subsequent degradation. In terms of processing, polyubiquitinated at Lys-21 and/or Lys-22 following phosphorylation at Ser-32 and Ser-36. Monoubiquitinated at Lys-21 and/or Lys-22 by UBE2D3. Ubiquitin chain elongation is then performed by CDC34 in cooperation with the SCF(FBXW11) E3 ligase complex, building ubiquitin chains from the UBE2D3-primed NFKBIA-linked ubiquitin. The resulting polyubiquitination leads to protein degradation. Also ubiquitinated by the SCF(BTRC) complex following stimulus-dependent phosphorylation at Ser-32 and Ser-36. Deubiquitinated by USP38, leading to NF-kappa-B inhibition. Sumoylated; sumoylation requires the presence of the nuclear import signal. Sumoylation blocks ubiquitination and proteasome-mediated degradation of the protein thereby increasing the protein stability. Post-translationally, hydroxylated by HIF1AN.

The protein localises to the cytoplasm. It localises to the nucleus. Its function is as follows. Inhibits the activity of dimeric NF-kappa-B/REL complexes by trapping REL (RELA/p65 and NFKB1/p50) dimers in the cytoplasm by masking their nuclear localization signals. On cellular stimulation by immune and pro-inflammatory responses, becomes phosphorylated promoting ubiquitination and degradation, enabling the dimeric RELA to translocate to the nucleus and activate transcription. The polypeptide is NF-kappa-B inhibitor alpha (NFKBIA) (Sus scrofa (Pig)).